The primary structure comprises 278 residues: Thioredoxin-related transmembrane protein 1 (278 aa).

A signal peptide spans 1 to 26; that stretch reads MAPSGSLRIPVAVLLLLLWGAPWAHG. In terms of domain architecture, Thioredoxin spans 27–132; sequence KRSDVRIITD…FINFISDKEW (106 aa). At 27-180 the chain is on the extracellular side; that stretch reads KRSDVRIITD…EDLGLPIWGS (154 aa). Active-site nucleophile residues include Cys-56 and Cys-59. A disulfide bridge links Cys-56 with Cys-59. The chain crosses the membrane as a helical span at residues 181-203; sequence YTVFALATLLSGLLLGLFMIFVA. Residues 204–278 are Cytoplasmic-facing; that stretch reads DCLCPSKRRR…VGPSLATDKS (75 aa). 2 S-palmitoyl cysteine lipidation sites follow: Cys-205 and Cys-207. Positions 213 to 278 are disordered; it reads RPQPYPSRKL…VGPSLATDKS (66 aa). 5 positions are modified to phosphoserine: Ser-226, Ser-245, Ser-268, Ser-272, and Ser-278. Acidic residues predominate over residues 235–250; that stretch reads EEQEADVEDVSEEESE.

Interacts with ATP2A2. Post-translationally, palmitoylated; palmitoylation is required for localization to mitochondria-associated endoplasmic reticulum membrane (MAM).

Its subcellular location is the endoplasmic reticulum membrane. It localises to the mitochondrion membrane. The protein localises to the secreted. It catalyses the reaction Catalyzes the rearrangement of -S-S- bonds in proteins.. In terms of biological role, thiredoxin domain-containing protein that participates in various redox reactions through the reversible oxidation of its active center dithiol to a disulfide and catalyze dithiol-disulfide exchange reactions. Acts as a key inhibitor of the alternative triglyceride biosynthesis pathway by inhibiting the activity of TMEM68/DIESL at the endoplasmic reticulum, thereby restricting accumulation of triacylglycerol. The alternative triglyceride biosynthesis pathway mediates formation of triacylglycerol from diacylglycerol and membrane phospholipids. Acts as a protein disulfide isomerase by catalyzing formation or reduction of disulfide bonds. Specifically mediates formation of disulfide bonds of transmembrane proteins at the endoplasmic reticulum membrane. Involved in endoplasmic reticulum-associated degradation (ERAD) via its protein disulfide isomerase activity by acting on folding-defective polypeptides at the endoplasmic reticulum membrane. Acts as a negative regulator of platelet aggregation following secretion in the extracellular space. Acts as a regulator of endoplasmic reticulum-mitochondria contact sites via its ability to regulate redox signals. Regulates endoplasmic reticulum-mitochondria Ca(2+) flux. The polypeptide is Thioredoxin-related transmembrane protein 1 (TMX1) (Bos taurus (Bovine)).